We begin with the raw amino-acid sequence, 370 residues long: 3-isopropylmalate dehydrogenase (370 aa).

77–90 (GPKWDSVPYEVRPE) contacts NAD(+). Substrate-binding residues include Arg97, Arg107, Arg135, and Asp226. 3 residues coordinate Mg(2+): Asp226, Asp250, and Asp254. 290–302 (GSAPDIAGKGIAN) lines the NAD(+) pocket.

The protein belongs to the isocitrate and isopropylmalate dehydrogenases family. LeuB type 1 subfamily. In terms of assembly, homodimer. It depends on Mg(2+) as a cofactor. Mn(2+) serves as cofactor.

It is found in the cytoplasm. The catalysed reaction is (2R,3S)-3-isopropylmalate + NAD(+) = 4-methyl-2-oxopentanoate + CO2 + NADH. Its pathway is amino-acid biosynthesis; L-leucine biosynthesis; L-leucine from 3-methyl-2-oxobutanoate: step 3/4. Catalyzes the oxidation of 3-carboxy-2-hydroxy-4-methylpentanoate (3-isopropylmalate) to 3-carboxy-4-methyl-2-oxopentanoate. The product decarboxylates to 4-methyl-2 oxopentanoate. This is 3-isopropylmalate dehydrogenase from Rhizobium etli (strain ATCC 51251 / DSM 11541 / JCM 21823 / NBRC 15573 / CFN 42).